The sequence spans 101 residues: uncharacterized protein (101 aa).

This is an uncharacterized protein from Escherichia coli O157:H7.